A 469-amino-acid polypeptide reads, in one-letter code: Cysteine--tRNA ligase (469 aa).

Cys-28 provides a ligand contact to Zn(2+). Positions 30-40 (PTVYNYIHIGN) match the 'HIGH' region motif. 3 residues coordinate Zn(2+): Cys-213, His-238, and Glu-242. A 'KMSKS' region motif is present at residues 270–274 (KMSKS). ATP is bound at residue Lys-273.

The protein belongs to the class-I aminoacyl-tRNA synthetase family. Monomer. Requires Zn(2+) as cofactor.

The protein localises to the cytoplasm. It carries out the reaction tRNA(Cys) + L-cysteine + ATP = L-cysteinyl-tRNA(Cys) + AMP + diphosphate. This is Cysteine--tRNA ligase from Leuconostoc citreum (strain KM20).